We begin with the raw amino-acid sequence, 176 residues long: Transcription factor E (176 aa).

Positions 8–90 (EDPVIQKYLH…LWTFQYEKIP (83 aa)) constitute an HTH TFE/IIEalpha-type domain.

This sequence belongs to the TFE family. In terms of assembly, monomer. Interaction with RNA polymerase subunits RpoF and RpoE is necessary for Tfe stimulatory transcription activity. Able to interact with Tbp and RNA polymerase in the absence of DNA promoter. Interacts both with the preinitiation and elongation complexes.

In terms of biological role, transcription factor that plays a role in the activation of archaeal genes transcribed by RNA polymerase. Facilitates transcription initiation by enhancing TATA-box recognition by TATA-box-binding protein (Tbp), and transcription factor B (Tfb) and RNA polymerase recruitment. Not absolutely required for transcription in vitro, but particularly important in cases where Tbp or Tfb function is not optimal. It dynamically alters the nucleic acid-binding properties of RNA polymerases by stabilizing the initiation complex and destabilizing elongation complexes. Seems to translocate with the RNA polymerase following initiation and acts by binding to the non template strand of the transcription bubble in elongation complexes. The polypeptide is Transcription factor E (Haloarcula marismortui (strain ATCC 43049 / DSM 3752 / JCM 8966 / VKM B-1809) (Halobacterium marismortui)).